Here is a 621-residue protein sequence, read N- to C-terminus: 2-hydroxyacyl-CoA lyase 2 (621 aa).

A helical membrane pass occupies residues 7–29 (LGCSLGAALGGVIFASYKLGLLY). Glu87 contributes to the thiamine diphosphate binding site. The interval 459–539 (DFVGSAAYIM…VIALVGNDAC (81 aa)) is thiamine pyrophosphate binding. Residues Asp510 and Asn536 each contribute to the Mg(2+) site.

This sequence belongs to the TPP enzyme family. It depends on Mg(2+) as a cofactor. Requires thiamine diphosphate as cofactor.

Its subcellular location is the endoplasmic reticulum membrane. The enzyme catalyses 2-hydroxyoctadecanoyl-CoA = heptadecanal + formyl-CoA. It carries out the reaction (2R)-hydroxyhexadecanoyl-CoA = pentadecanal + formyl-CoA. Functionally, endoplasmic reticulum 2-OH acyl-CoA lyase involved in the cleavage (C1 removal) reaction in the fatty acid alpha-oxydation in a thiamine pyrophosphate (TPP)-dependent manner. The protein is 2-hydroxyacyl-CoA lyase 2 (ilvbl) of Danio rerio (Zebrafish).